The following is a 159-amino-acid chain: 4-deoxy-4-sulfo-D-erythrose isomerase (159 aa).

Cysteine 66 (proton acceptor) is an active-site residue.

Belongs to the LacAB/RpiB family.

It catalyses the reaction 4-deoxy-4-sulfo-D-erythrose = 4-deoxy-4-sulfo-D-erythrulose. Part of the sulfo-TK pathway, a D-sulfoquinovose degradation pathway that produces 2-hydroxyethane-1-sulfonate (isethionate). Catalyzes the isomerization of 4-deoxy-4-sulfo-D-erythrose (SE) to 4-deoxy-4-sulfo-D-erythrulose (SEu). The protein is 4-deoxy-4-sulfo-D-erythrose isomerase of Clostridium sp. (strain MSTE9).